The sequence spans 161 residues: Regulator of ribonuclease activity A (161 aa).

Belongs to the RraA family. As to quaternary structure, homotrimer. Binds to both RNA-binding sites in the C-terminal region of Rne and to RhlB.

It is found in the cytoplasm. Functionally, globally modulates RNA abundance by binding to RNase E (Rne) and regulating its endonucleolytic activity. Can modulate Rne action in a substrate-dependent manner by altering the composition of the degradosome. Modulates RNA-binding and helicase activities of the degradosome. The protein is Regulator of ribonuclease activity A of Photobacterium profundum (strain SS9).